A 380-amino-acid polypeptide reads, in one-letter code: Chaperone protein DnaJ (380 aa).

Residues 5–69 (DFYEVLGVGR…QKKAAYDQYG (65 aa)) enclose the J domain. The CR-type zinc finger occupies 135-213 (GCSKEIRVPT…CHGQGRVEKT (79 aa)). 8 residues coordinate Zn(2+): Cys-148, Cys-151, Cys-165, Cys-168, Cys-187, Cys-190, Cys-201, and Cys-204. CXXCXGXG motif repeat units lie at residues 148-155 (CDSCDGSG), 165-172 (CGTCHGQG), 187-194 (CPHCHGRG), and 201-208 (CNSCHGQG).

The protein belongs to the DnaJ family. As to quaternary structure, homodimer. Zn(2+) is required as a cofactor.

It is found in the cytoplasm. Functionally, participates actively in the response to hyperosmotic and heat shock by preventing the aggregation of stress-denatured proteins and by disaggregating proteins, also in an autonomous, DnaK-independent fashion. Unfolded proteins bind initially to DnaJ; upon interaction with the DnaJ-bound protein, DnaK hydrolyzes its bound ATP, resulting in the formation of a stable complex. GrpE releases ADP from DnaK; ATP binding to DnaK triggers the release of the substrate protein, thus completing the reaction cycle. Several rounds of ATP-dependent interactions between DnaJ, DnaK and GrpE are required for fully efficient folding. Also involved, together with DnaK and GrpE, in the DNA replication of plasmids through activation of initiation proteins. This is Chaperone protein DnaJ from Photobacterium profundum (strain SS9).